Here is a 188-residue protein sequence, read N- to C-terminus: uncharacterized protein (188 aa).

The N-terminal stretch at 1-18 (MTLRIIAHLLALTASLAG) is a signal peptide. C19 carries the N-palmitoyl cysteine lipid modification. C19 carries the S-diacylglycerol cysteine lipid modification.

The protein resides in the cell membrane. This is an uncharacterized protein from Sinorhizobium fredii (strain NBRC 101917 / NGR234).